Reading from the N-terminus, the 133-residue chain is Peptide methionine sulfoxide reductase MsrB (133 aa).

The span at 1 to 12 (MSEKVQKSEHEW) shows a compositional bias: basic and acidic residues. The disordered stretch occupies residues 1–36 (MSEKVQKSEHEWQQQLTPEQYRVTREKGTERPFTGD). Positions 9–132 (EHEWQQQLTP…NSVSLDFHPG (124 aa)) constitute a MsrB domain. Zn(2+)-binding residues include Cys48, Cys51, Cys97, and Cys100. Cys121 serves as the catalytic Nucleophile.

It belongs to the MsrB Met sulfoxide reductase family. Requires Zn(2+) as cofactor.

The enzyme catalyses L-methionyl-[protein] + [thioredoxin]-disulfide + H2O = L-methionyl-(R)-S-oxide-[protein] + [thioredoxin]-dithiol. This Chromohalobacter salexigens (strain ATCC BAA-138 / DSM 3043 / CIP 106854 / NCIMB 13768 / 1H11) protein is Peptide methionine sulfoxide reductase MsrB.